The sequence spans 500 residues: MPDAVKVGFVLFATPARGTLIVFCDDGLKFGATATKALGAAVATVKRAAATAQFKGKSGSALDLLAPEGLKVGRLIVVGAGKAASINDYDLLKLGGAVAGKIGAGDTAVTVVADLPTGAMKPEQAAAIASGIRLRAYKFDRYKTKKKDDENGAANASVTLAVADPAAAKKAFTPDSHVVDGVILARELVNEPPNVLYPEEFAKRAAQLKKLGVEVQILDVKAMTQLKMGALLGVSQGSAHPGRTVIMRWNGGKKGEQPLAFVGKGVCFDTGGISIKPSASMEDMKGDMGGAACVVGLMHALAARKAKVNAVGAIGLVENMPDGNAQRPGDIVTSMSGQTIEIINTDAEGRLVLADVLWYVAQKHKPKFMVDLATLTGAIMVALGTEYAGLFSNNDQLAERLAAVGQSTGEKVWRMPLGPEYDKQIDSQFADMKNTGSRNGGSITAAQFLQRFVDGTPWAHLDIAGTAMASPKNEINQSWGSGYGVRLLNQLVAEYYEAKK.

Mn(2+)-binding residues include lysine 264 and aspartate 269. Residue lysine 276 is part of the active site. Residues aspartate 287, aspartate 346, and glutamate 348 each contribute to the Mn(2+) site. Residue arginine 350 is part of the active site.

It belongs to the peptidase M17 family. Mn(2+) serves as cofactor.

The protein resides in the cytoplasm. It catalyses the reaction Release of an N-terminal amino acid, Xaa-|-Yaa-, in which Xaa is preferably Leu, but may be other amino acids including Pro although not Arg or Lys, and Yaa may be Pro. Amino acid amides and methyl esters are also readily hydrolyzed, but rates on arylamides are exceedingly low.. It carries out the reaction Release of an N-terminal amino acid, preferentially leucine, but not glutamic or aspartic acids.. Presumably involved in the processing and regular turnover of intracellular proteins. Catalyzes the removal of unsubstituted N-terminal amino acids from various peptides. The chain is Probable cytosol aminopeptidase from Rhodopseudomonas palustris (strain ATCC BAA-98 / CGA009).